We begin with the raw amino-acid sequence, 346 residues long: Probable galacturonosyltransferase-like 6 (346 aa).

A helical; Signal-anchor for type II membrane protein transmembrane segment spans residues 1–21 (MLWITRFAGLFSAAMAVIVLS). Residues 22-346 (PSLQSFPPAA…TPYDLYRHSH (325 aa)) are Lumenal-facing. Asparagine 203 is a glycosylation site (N-linked (GlcNAc...) asparagine).

It belongs to the glycosyltransferase 8 family.

It localises to the golgi apparatus membrane. It participates in glycan metabolism; pectin biosynthesis. Functionally, may be involved in pectin and/or xylans biosynthesis in cell walls. The protein is Probable galacturonosyltransferase-like 6 (GATL6) of Arabidopsis thaliana (Mouse-ear cress).